A 348-amino-acid polypeptide reads, in one-letter code: Hereditary hemochromatosis protein homolog (348 aa).

A signal peptide spans 1–22; it reads MGPRARPALFFLILLRTVAAQG. The interval 23–114 is alpha-1; it reads RPPRSHSLRY…IMDNHNHSKE (92 aa). Over 23-306 the chain is Extracellular; sequence RPPRSHSLRY…WEPSLSNTLV (284 aa). N110, N130, and N234 each carry an N-linked (GlcNAc...) asparagine glycan. Residues 115-205 are alpha-2; it reads SHTLQVILGC…ELGRGVLDQQ (91 aa). Intrachain disulfides connect C124/C187 and C225/C282. Residues 206 to 297 are alpha-3; the sequence is VPPLVKVTHH…GLDQPLTATW (92 aa). The Ig-like C1-type domain occupies 207 to 296; sequence PPLVKVTHHV…PGLDQPLTAT (90 aa). The connecting peptide stretch occupies residues 298–306; it reads EPSLSNTLV. A helical transmembrane segment spans residues 307 to 330; the sequence is TGVISGIAVCVIIFLIGILFRILR. The Cytoplasmic segment spans residues 331 to 348; it reads KRQASRGAMGDYVLAECE.

The protein belongs to the MHC class I family. Binds TFR through the extracellular domain in a pH-dependent manner.

The protein resides in the cell membrane. Its function is as follows. Binds to transferrin receptor (TFR) and reduces its affinity for iron-loaded transferrin. The polypeptide is Hereditary hemochromatosis protein homolog (HFE) (Dicerorhinus sumatrensis (Sumatran rhinoceros)).